Here is a 923-residue protein sequence, read N- to C-terminus: Protocadherin gamma-B5 (923 aa).

The N-terminal stretch at 1–30 is a signal peptide; it reads MGSGAGELGRAERLPVLFLFLLSLFCPALC. 6 consecutive Cadherin domains span residues 31–133, 134–242, 243–343, 344–448, 449–558, and 566–671; these read EQIR…TPKF, TQNS…PPVF, NRDV…SPEV, TFHS…APVF, HQAS…APRV, and DGSA…LPDI. The Extracellular segment spans residues 31 to 687; that stretch reads EQIRYRIPEE…SDPQAELQFY (657 aa). Asparagine 415 and asparagine 541 each carry an N-linked (GlcNAc...) asparagine glycan. A helical membrane pass occupies residues 688–708; sequence LVVALALISVLFLLAVILAVA. The Cytoplasmic portion of the chain corresponds to 709-923; the sequence is LRLRRSSSPA…KKKSGKKEKK (215 aa). 2 disordered regions span residues 794 to 832 and 893 to 923; these read TSHPELQAPPNTDWRFSQAQRPGTSGSQNGDDTGTWPNN and ATLTNAAGKRDGKAPAGGNGNKKKSGKKEKK. Over residues 807–832 the composition is skewed to polar residues; the sequence is WRFSQAQRPGTSGSQNGDDTGTWPNN. The segment covering 913 to 923 has biased composition (basic residues); that stretch reads NKKKSGKKEKK.

Its subcellular location is the cell membrane. Potential calcium-dependent cell-adhesion protein. May be involved in the establishment and maintenance of specific neuronal connections in the brain. This Homo sapiens (Human) protein is Protocadherin gamma-B5 (PCDHGB5).